We begin with the raw amino-acid sequence, 2332 residues long: Genome polyprotein (2332 aa).

The region spanning 1–201 is the Peptidase C28 domain; it reads MNTTNCFIAL…WKTQVQKKLK (201 aa). Residues 1–1480 are Cytoplasmic-facing; the sequence is MNTTNCFIAL…SFVKRAFKRL (1480 aa). Catalysis depends on for leader protease activity residues C51, H148, and D163. Disordered stretches follow at residues 199-218 and 237-264; these read KLKG…QSGN and TQLG…TNTQ. G202 carries the N-myristoyl glycine; by host lipid modification. Polar residues-rich tracts occupy residues 204–218 and 237–251; these read GQSS…QSGN and TQLG…SNEG. Positions 252-264 are enriched in low complexity; that stretch reads STDTTSTHTTNTQ. The tract at residues 789–797 is antigenic epitope; that stretch reads ALLRAATYY. The Cell attachment site signature appears at 867–870; sequence RSGD. The SF3 helicase domain occupies 1189 to 1353; that stretch reads NVHIANLCKV…DGYKINNKLD (165 aa). Residue 1217-1224 participates in ATP binding; it reads GKSGQGKS. An intramembrane segment occupies 1481 to 1501; it reads KENFEIVALCLTLLANIVIMI. Topologically, residues 1502 to 2332 are cytoplasmic; it reads RETRKRQKMV…RWVNAVCGDA (831 aa). Basic and acidic residues-rich tracts occupy residues 1529-1538 and 1549-1563; these read KTLDEAEKNP and FRER…RDDV. The interval 1529-1588 is disordered; it reads KTLDEAEKNPLETSGASTVGFRERSLTGQKVRDDVSSEPAQPAEDQPQAEGPYSGPLERQ. O-(5'-phospho-RNA)-tyrosine occurs at positions 1581, 1604, and 1628. The Peptidase C3 domain maps to 1652 to 1848; that stretch reads APPTDLQKMV…YCSCVSRSML (197 aa). H1695 serves as the catalytic For protease 3C activity; Proton donor/acceptor. Catalysis depends on for protease 3C activity residues D1733 and C1812. The short motif at 1878-1886 is the Nuclear localization signal element; it reads MRKTKLAPT. Residues 2096–2214 form the RdRp catalytic domain; it reads RNVWDVDYSA…ASDYDLDFEA (119 aa). The For RdRp activity role is filled by D2200.

This sequence belongs to the picornaviruses polyprotein family. As to quaternary structure, interacts with host ISG15. Interacts (via R-G-D motif) with host ITGAV/ITGB6. Interacts with host MAVS; this interaction inhibits binding of host TRAF3 to MAVS, thereby suppressing interferon-mediated responses. In terms of assembly, forms homooligomers. As to quaternary structure, homohexamer. Interacts with host VIM. Interacts with host BECN1. Interacts with host DCTN3. In terms of assembly, interacts with RNA-dependent RNA polymerase; this interaction allows 3B-1 to binds 2 polymerases and act as a primer. It also allows the recruitment of the RNA-dependent RNA polymerase to host membranes. As to quaternary structure, interacts with RNA-dependent RNA polymerase; this interaction allows 3B-2 to act as a primer. Interacts with RNA-dependent RNA polymerase; this interaction allows 3B-3 to act as a primer. In terms of assembly, interacts with 3B-1; this interaction allows 3B-1 to binds 2 polymerases and act as a primer. It also allows the recruitment of the RNA-dependent RNA polymerase to host membranes. Interacts with 3B-2; this interaction allows 3B-2 to act as a primer. Interacts with 3B-3; this interaction allows 3B-3 to act as a primer. In terms of processing, removes six residues from its own C-terminus, generating sLb(pro). Post-translationally, specific enzymatic cleavages in vivo by the viral proteases yield a variety of precursors and mature proteins. The polyprotein seems to be cotranslationally cleaved at the 2A/2B junction by a ribosomal skip from one codon to the next without formation of a peptide bond. This process would release the L-P1-2A peptide from the translational complex. During virion maturation, immature virions are rendered infectious following cleavage of VP0 into VP4 and VP2. This maturation seems to be an autocatalytic event triggered by the presence of RNA in the capsid and is followed by a conformational change of the particle. In terms of processing, myristoylation is required during RNA encapsidation and formation of the mature virus particle. Post-translationally, uridylylated by the polymerase and covalently linked to the 5'-end of genomic RNA. These uridylylated forms act as a nucleotide-peptide primer for the polymerase.

The protein localises to the host nucleus. Its subcellular location is the host cytoplasm. It is found in the virion. It localises to the host endoplasmic reticulum membrane. The protein resides in the host cytoplasmic vesicle membrane. The enzyme catalyses Autocatalytically cleaves itself from the polyprotein of the foot-and-mouth disease virus by hydrolysis of a Lys-|-Gly bond, but then cleaves host cell initiation factor eIF-4G at bonds -Gly-|-Arg- and -Lys-|-Arg-.. It carries out the reaction a ribonucleoside 5'-triphosphate + H2O = a ribonucleoside 5'-diphosphate + phosphate + H(+). The catalysed reaction is RNA(n) + a ribonucleoside 5'-triphosphate = RNA(n+1) + diphosphate. It catalyses the reaction Selective cleavage of Gln-|-Gly bond in the poliovirus polyprotein. In other picornavirus reactions Glu may be substituted for Gln, and Ser or Thr for Gly.. Autocatalytically cleaves itself from the polyprotein at the L/VP0 junction. Also cleaves the host translation initiation factors EIF4G1 and EIF4G3, in order to shut off the capped cellular mRNA transcription. Plays a role in counteracting host innate antiviral response using diverse mechanisms. Possesses a deubiquitinase activity acting on both 'Lys-48' and 'Lys-63'-linked polyubiquitin chains. In turn, inhibits the ubiquitination and subsequent activation of key signaling molecules of type I IFN response such as host RIGI, TBK1, TRAF3 and TRAF6. Inhibits host NF-kappa-B activity by inducing a decrease in RELA mRNA levels. Cleaves a peptide bond in the C-terminus of host ISG15, resulting in the damaging of this modifier that can no longer be attached to target proteins. Also cleaves host G3BP1 and G3BP2 in order to inhibit cytoplasmic stress granules assembly. Functionally, lies on the inner surface of the capsid shell. After binding to the host receptor, the capsid undergoes conformational changes. Capsid protein VP4 is released, capsid protein VP1 N-terminus is externalized, and together, they shape a pore in the host membrane through which the viral genome is translocated into the host cell cytoplasm. After genome has been released, the channel shrinks. Its function is as follows. Forms an icosahedral capsid of pseudo T=3 symmetry with capsid proteins VP1 and VP3. The capsid is composed of 60 copies of each capsid protein organized in the form of twelve pentamers and encloses the viral positive strand RNA genome. Upon acidifcation in the endosome, dissociates into pentamers. In terms of biological role, forms an icosahedral capsid of pseudo T=3 symmetry with capsid proteins VP2 and VP3. The capsid is composed of 60 copies of each capsid protein organized in the form of twelve pentamers and encloses the viral positive strand RNA genome. Mediates cell entry by attachment to an integrin receptor, usually host ITGAV/ITGB6. In addition, targets host MAVS to suppress type I IFN pathway. Upon acidifcation in the endosome, dissociates into pentamers. Forms an icosahedral capsid of pseudo T=3 symmetry with capsid proteins VP0 and VP3. The capsid is composed of 60 copies of each capsid protein organized in the form of twelve pentamers and encloses the viral positive strand RNA genome. Functionally, mediates self-processing of the polyprotein by a translational effect termed 'ribosome skipping'. Mechanistically, 2A-mediated cleavage occurs between the C-terminal glycine and the proline of the downstream protein 2B. In the case of foot-and-mouth disease virus, the 2A oligopeptide is post-translationally 'trimmed' from the C-terminus of the upstream protein 1D by 3C proteinase. Its function is as follows. Plays an essential role in the virus replication cycle by acting as a viroporin. Creates a pore in the host endoplasmic reticulum and as a consequence releases Ca2+ in the cytoplasm of infected cell. In turn, high levels of cytoplasmic calcium may trigger membrane trafficking and transport of viral ER-associated proteins to viroplasms, sites of viral genome replication. In terms of biological role, associates with and induces structural rearrangements of intracellular membranes. Triggers host autophagy by interacting with host BECN1 and thereby promotes viral replication. Participates in viral replication and interacts with host DHX9. Displays RNA-binding, nucleotide binding and NTPase activities. May play a role in virion morphogenesis and viral RNA encapsidation by interacting with the capsid protein VP3. Plays important roles in virus replication, virulence and host range. Cooperates with host DDX56 to inhibit IRF3 nuclear translocation and subsequent type I interferon production. Functionally, covalently linked to the 5'-end of both the positive-strand and negative-strand genomic RNAs. Acts as a genome-linked replication primer. Its function is as follows. Covalently linked to the 5'-end0 of both the positive-strand and negative-strand genomic RNAs. Acts as a genome-linked replication primer. In terms of biological role, cysteine protease that generates mature viral proteins from the precursor polyprotein. In addition to its proteolytic activity, binds to viral RNA and thus influences viral genome replication. RNA and substrate bind cooperatively to the protease. RNA-directed RNA polymerase 3D-POL replicates genomic and antigenomic RNA by recognizing replications specific signals. Covalently attaches UMP to a tyrosine of VPg, which is used to prime RNA synthesis. The positive stranded RNA genome is first replicated at virus induced membranous vesicles, creating a dsRNA genomic replication form. This dsRNA is then used as template to synthesize positive stranded RNA genomes. ss(+)RNA genomes are either translated, replicated or encapsidated. The polypeptide is Genome polyprotein (Bos taurus (Bovine)).